The following is a 203-amino-acid chain: Small ribosomal subunit protein uS4 (203 aa).

The region spanning 93–156 (RRLDNVVYRL…IKVPAILEAV (64 aa)) is the S4 RNA-binding domain.

This sequence belongs to the universal ribosomal protein uS4 family. As to quaternary structure, part of the 30S ribosomal subunit. Contacts protein S5. The interaction surface between S4 and S5 is involved in control of translational fidelity.

One of the primary rRNA binding proteins, it binds directly to 16S rRNA where it nucleates assembly of the body of the 30S subunit. Functionally, with S5 and S12 plays an important role in translational accuracy. This chain is Small ribosomal subunit protein uS4, found in Streptococcus suis (strain 98HAH33).